The sequence spans 198 residues: Basic helix-loop-helix transcription factor amos (198 aa).

Residues 76–131 (EQQQHHLQANPLGKNQGRSPRYWNKQQRSKPYDKLSTSMSSSTSSASSSSSSSAGF) form a disordered region. A compositionally biased stretch (low complexity) spans 111-129 (STSMSSSTSSASSSSSSSA). The 53-residue stretch at 138-190 (KRRLAANARERRRMNSLNDAFDKLRDVVPSLGHDRRLSKYETLQMAQAYIGDL) folds into the bHLH domain.

As to quaternary structure, efficient DNA binding requires dimerization with another bHLH protein. Interacts with Daughterless (da). In terms of tissue distribution, during embryonic development, expression is seen in a small cluster of ectodermal cells during stage 10 which becomes restricted to 1 cell by stage 11. Expression is lost from this cell in the thorax and then the abdomen. Later expression is restricted to sensory organ precursors. Very transient expression was detected in distal leg disks at approximately 0-4 hours after puparium formation (APF), correlating with the anlage of the innervated tarsal claw.

It is found in the nucleus. Transcription factor involved in early neurogenesis; sensillum basiconica formation and maybe sensillum trichodea development. Promotes multiple dendritic (MD) neuron formation. Required for olfactory sensilla; regulated by lozenge (lz). In Drosophila melanogaster (Fruit fly), this protein is Basic helix-loop-helix transcription factor amos (amos).